The sequence spans 322 residues: MDVMTLAAIPSPPQGVWYLGPLPIRAYAMCIIAGIIVAIWLTRKRYAARGGNPEVVLDAAIVAVPAGIIGGRIYHVITDNQKYFCETCDPVDALKITNGGLGIWGAVILGGLAVWAYFRYKKIPLAPFADAVAPGVILAQAIGRLGNWFNQELYGAETDVPWALEIYYRVDENGRFAPVTGVSTGEVIATVHPTFLYEMLWNLLIFGLLIWADRRFRLGHGRVFALYVAGYTLGRFWIEQMRTDEATMVFGMRINTLVSAVVFILAVIVFLRLGKGREAPAEVDPAYHAAQAERDDTETAGLDATTGTVPGDSPETTGKKRK.

4 helical membrane-spanning segments follow: residues 21 to 41 (PLPIRAYAMCIIAGIIVAIWL), 50 to 70 (GGNPEVVLDAAIVAVPAGIIG), 98 to 118 (NGGLGIWGAVILGGLAVWAYF), and 123 to 143 (IPLAPFADAVAPGVILAQAIG). A 1,2-diacyl-sn-glycero-3-phospho-(1'-sn-glycerol) is bound at residue arginine 144. 2 helical membrane-spanning segments follow: residues 191–211 (VHPTFLYEMLWNLLIFGLLIW) and 254–274 (INTLVSAVVFILAVIVFLRLG). A disordered region spans residues 283–322 (VDPAYHAAQAERDDTETAGLDATTGTVPGDSPETTGKKRK).

This sequence belongs to the Lgt family.

Its subcellular location is the cell membrane. The catalysed reaction is L-cysteinyl-[prolipoprotein] + a 1,2-diacyl-sn-glycero-3-phospho-(1'-sn-glycerol) = an S-1,2-diacyl-sn-glyceryl-L-cysteinyl-[prolipoprotein] + sn-glycerol 1-phosphate + H(+). The protein operates within protein modification; lipoprotein biosynthesis (diacylglyceryl transfer). In terms of biological role, catalyzes the transfer of the diacylglyceryl group from phosphatidylglycerol to the sulfhydryl group of the N-terminal cysteine of a prolipoprotein, the first step in the formation of mature lipoproteins. This is Phosphatidylglycerol--prolipoprotein diacylglyceryl transferase from Corynebacterium efficiens (strain DSM 44549 / YS-314 / AJ 12310 / JCM 11189 / NBRC 100395).